Consider the following 308-residue polypeptide: Acetyl-coenzyme A carboxylase carboxyl transferase subunit beta (308 aa).

In terms of domain architecture, CoA carboxyltransferase N-terminal spans 25–294 (VWTKCTSCEQ…PLVVSVNDSP (270 aa)). Residues Cys29, Cys32, Cys48, and Cys51 each coordinate Zn(2+). The C4-type zinc-finger motif lies at 29–51 (CTSCEQVLYHAELERNLEVCPKC).

It belongs to the AccD/PCCB family. Acetyl-CoA carboxylase is a heterohexamer composed of biotin carboxyl carrier protein (AccB), biotin carboxylase (AccC) and two subunits each of ACCase subunit alpha (AccA) and ACCase subunit beta (AccD). It depends on Zn(2+) as a cofactor.

Its subcellular location is the cytoplasm. It catalyses the reaction N(6)-carboxybiotinyl-L-lysyl-[protein] + acetyl-CoA = N(6)-biotinyl-L-lysyl-[protein] + malonyl-CoA. The protein operates within lipid metabolism; malonyl-CoA biosynthesis; malonyl-CoA from acetyl-CoA: step 1/1. Component of the acetyl coenzyme A carboxylase (ACC) complex. Biotin carboxylase (BC) catalyzes the carboxylation of biotin on its carrier protein (BCCP) and then the CO(2) group is transferred by the transcarboxylase to acetyl-CoA to form malonyl-CoA. This Vibrio vulnificus (strain CMCP6) protein is Acetyl-coenzyme A carboxylase carboxyl transferase subunit beta.